The following is a 365-amino-acid chain: Class I histocompatibility antigen, Gogo-A*0501 alpha chain (365 aa).

An N-terminal signal peptide occupies residues 1–24; the sequence is MAVVAPRTLLLLLSGALALTQTWA. The alpha-1 stretch occupies residues 25–114; the sequence is GSHSMRYFST…ALRYYNQSED (90 aa). Topologically, residues 25-308 are extracellular; the sequence is GSHSMRYFST…EPSSQPTIPI (284 aa). An N-linked (GlcNAc...) asparagine glycan is attached at Asn-110. The segment at 115–206 is alpha-2; that stretch reads GSHTIQRMYG…ENGKETLQRT (92 aa). Disulfide bonds link Cys-125–Cys-188 and Cys-227–Cys-283. The interval 207-298 is alpha-3; sequence DAPKTHTTHQ…GLPKPLTLRW (92 aa). Residues 209-295 enclose the Ig-like C1-type domain; sequence PKTHTTHQAV…QHEGLPKPLT (87 aa). The interval 299-308 is connecting peptide; that stretch reads EPSSQPTIPI. Residues 309–332 form a helical membrane-spanning segment; that stretch reads VGIIAGLVLFGAVIAGAVVAAVRW. The Cytoplasmic portion of the chain corresponds to 333-365; that stretch reads RRKSSDRKGGSYSQAASSDSAQGSDVSLTACKV. A disordered region spans residues 338–365; that stretch reads DRKGGSYSQAASSDSAQGSDVSLTACKV. Over residues 342-359 the composition is skewed to low complexity; that stretch reads GSYSQAASSDSAQGSDVS. Ser-343 bears the Phosphoserine mark. Residue Tyr-344 is modified to Phosphotyrosine. 5 positions are modified to phosphoserine: Ser-345, Ser-349, Ser-352, Ser-356, and Ser-359.

This sequence belongs to the MHC class I family. In terms of assembly, heterodimer of an alpha chain and a beta chain (beta-2-microglobulin).

The protein resides in the membrane. Its function is as follows. Involved in the presentation of foreign antigens to the immune system. The protein is Class I histocompatibility antigen, Gogo-A*0501 alpha chain of Gorilla gorilla gorilla (Western lowland gorilla).